Consider the following 182-residue polypeptide: MTFEQLIPLIIMAFALGMDAFSVSLGMGMMALKIRQILYIGVTIGIFHIIMPFIGMVLGRFLSEQYGDIAHFAGAILLIGLGFYIVYSSILENEETRTAPIGISLFVFAFGVSIDSFSVGLSLGIYGAQTVITILLFGFISMLLAWTGLFIGRHAKGMLGTYGEIVGGIILVGFGLYLLFPI.

6 consecutive transmembrane segments (helical) span residues Leu-6 to Gly-26, Ile-37 to Val-57, His-71 to Leu-91, Ile-101 to Leu-121, Val-131 to Ile-151, and Tyr-162 to Ile-182.

This sequence belongs to the MntP (TC 9.B.29) family.

It is found in the cell membrane. Functionally, probably functions as a manganese efflux pump. The polypeptide is Putative manganese efflux pump MntP (Bacillus cereus (strain Q1)).